The chain runs to 144 residues: Complexin-1 (144 aa).

A compositionally biased stretch (gly residues) spans 1 to 10; the sequence is MVSFLGGGLL. The tract at residues 1-119 is disordered; it reads MVSFLGGGLL…SGFPKNLDDL (119 aa). Basic and acidic residues-rich tracts occupy residues 18-27 and 36-86; these read LEEKEDKKEG and AEAK…EGRL. A coiled-coil region spans residues 29–67; that stretch reads EEEDPEIAEAKREAEEKRNEKYRKMEEEREVMRQGIRDK. Polar residues predominate over residues 103–112; that stretch reads LQSSAQSSGF. Position 141 is a cysteine methyl ester (Cys141). Residue Cys141 is the site of S-farnesyl cysteine attachment. A propeptide spans 142–144 (removed in mature form); sequence NLQ.

It belongs to the complexin/synaphin family. As to quaternary structure, binds to the SNARE core complex containing SNAP25, synaptobrevin and syntaxin-1. In terms of tissue distribution, expressed in a subset of neurons in the central nervous system, including large serotoninergic Retzius neurons and pressure-sensitive P cells.

Its subcellular location is the membrane. Functionally, positively regulates a late step in synaptic vesicle exocytosis. The polypeptide is Complexin-1 (cpx1) (Hirudo medicinalis (Medicinal leech)).